Reading from the N-terminus, the 81-residue chain is Photosystem I iron-sulfur center (81 aa).

4Fe-4S ferredoxin-type domains follow at residues Ala-2–Trp-31 and Ile-39–Tyr-68. [4Fe-4S] cluster contacts are provided by Cys-11, Cys-14, Cys-17, Cys-21, Cys-48, Cys-51, Cys-54, and Cys-58.

The eukaryotic PSI reaction center is composed of at least 11 subunits. [4Fe-4S] cluster serves as cofactor.

It is found in the plastid. The protein localises to the chloroplast thylakoid membrane. The catalysed reaction is reduced [plastocyanin] + hnu + oxidized [2Fe-2S]-[ferredoxin] = oxidized [plastocyanin] + reduced [2Fe-2S]-[ferredoxin]. In terms of biological role, apoprotein for the two 4Fe-4S centers FA and FB of photosystem I (PSI); essential for photochemical activity. FB is the terminal electron acceptor of PSI, donating electrons to ferredoxin. The C-terminus interacts with PsaA/B/D and helps assemble the protein into the PSI complex. Required for binding of PsaD and PsaE to PSI. PSI is a plastocyanin-ferredoxin oxidoreductase, converting photonic excitation into a charge separation, which transfers an electron from the donor P700 chlorophyll pair to the spectroscopically characterized acceptors A0, A1, FX, FA and FB in turn. The protein is Photosystem I iron-sulfur center of Zygnema circumcarinatum (Green alga).